The sequence spans 109 residues: MSNIVKFPRASKPPAPEPVQPAAPAAAPAAPKAEGRGLVAGLVKFVWVATVLVWPVLKWVLAIITFFQFVRMLYHWNTPGVYAGWSFLAYFAALTAITYFVSIYKPKGL.

The tract at residues methionine 1–alanine 27 is disordered. The span at serine 11 to proline 21 shows a compositional bias: pro residues. A run of 2 helical transmembrane segments spans residues tryptophan 47–phenylalanine 67 and valine 81–valine 101.

The protein resides in the cell membrane. In Escherichia coli, this protein is Protein KleE (kleE).